Here is a 981-residue protein sequence, read N- to C-terminus: Ubiquitin carboxyl-terminal hydrolase 37 (981 aa).

The short motif at 32 to 34 (KEN) is the KEN box 1 element. 2 consecutive short sequence motifs (D-box) follow at residues 71–79 (RLMLTLQDN) and 96–105 (RLFLDAVHQN). The disordered stretch occupies residues 111-306 (MKPSQGSGSF…TPSAKRSLGF (196 aa)). Residue serine 114 is modified to Phosphoserine. The segment covering 135-148 (RQLSYSDNQVSSKR) has biased composition (polar residues). A compositionally biased stretch (basic and acidic residues) spans 149–159 (GSLETKDDTPF). Residues 160–168 (RKVLGNPSR) carry the D-box 3 motif. Serine 170 carries the post-translational modification Phosphoserine. Residues 183–200 (RTIPSLTSTSTPLRSGLL) are compositionally biased toward low complexity. Serine 212 is modified (phosphoserine). The KEN box 2 motif lies at 223 to 225 (KEN). Positions 245 to 259 (SREKQLSLKQSEENR) are enriched in basic and acidic residues. Over residues 283 to 300 (PGSTNLDRTNISSQTPSA) the composition is skewed to polar residues. One can recognise a USP domain in the interval 343 to 953 (QGFSNLGNTC…SGYIFFYMHK (611 aa)). The active-site Nucleophile is cysteine 352. Serine 630 is modified (phosphoserine; by CDK2). A phosphoserine mark is found at serine 652 and serine 654. 2 disordered regions span residues 670-705 (EMSG…FDGM) and 721-797 (EASP…GEVD). Composition is skewed to basic and acidic residues over residues 683 to 697 (KDSK…KSEL) and 721 to 734 (EASP…DDKP). The 20-residue stretch at 706 to 725 (SEEELLAAVLEISKREASPS) folds into the UIM 1 domain. Position 772 is a phosphoserine (serine 772). A compositionally biased stretch (basic and acidic residues) spans 776–788 (ITKDCDENKENKT). Residues 784 to 786 (KEN) carry the KEN box 3 motif. 2 consecutive UIM domains span residues 808–827 (REEQ…QEAW) and 830–849 (KEDD…FNNS). The Proton acceptor role is filled by histidine 908.

This sequence belongs to the peptidase C19 family. As to quaternary structure, interacts with FZR1/CDH1. Interacts with CDT1. Post-translationally, polyubiquitinated via 'Lys-11'-linked ubiquitin by the APC(CDH1) complex during late mitosis, leading to its degradation. Able to mediate auto-deubiquitination. Phosphorylated at Ser-630 by CDK2 during G1/S phase but not during mitosis; phosphorylation at Ser-630 is required for deubiquitinase activity. Also polyubiquitinated during early G1 phase, without leading to degradation. Phosphorylated at Ser-114 by ATM following DNA damage, which in turn increases its deubiquitination activity towards BLM.

It localises to the nucleus. It is found in the chromosome. It carries out the reaction Thiol-dependent hydrolysis of ester, thioester, amide, peptide and isopeptide bonds formed by the C-terminal Gly of ubiquitin (a 76-residue protein attached to proteins as an intracellular targeting signal).. In terms of biological role, deubiquitinase that plays a role in different processes including cell cycle regulation, DNA replication or DNA damage response. Antagonizes the anaphase-promoting complex (APC/C) during G1/S transition by mediating deubiquitination of cyclin-A (CCNA1 and CCNA2), thereby promoting S phase entry. Specifically mediates deubiquitination of 'Lys-11'-linked polyubiquitin chains, a specific ubiquitin-linkage type mediated by the APC/C complex. Phosphorylation at Ser-628 during G1/S phase maximizes the deubiquitinase activity, leading to prevent degradation of cyclin-A (CCNA1 and CCNA2). Plays an important role in the regulation of DNA replication by stabilizing the licensing factor CDT1. Also plays an essential role beyond S-phase entry to promote the efficiency and fidelity of replication by deubiquitinating checkpoint kinase 1/CHK1, promoting its stability. Sustains the DNA damage response (DDR) by deubiquitinating and stabilizing the ATP-dependent DNA helicase BLM. Mechanistically, DNA double-strand breaks (DSB) promotes ATM-mediated phosphorylation of USP37 and enhances the binding between USP37 and BLM. Promotes cell migration by deubiquitinating and stabilizing the epithelial-mesenchymal transition (EMT)-inducing transcription factor SNAI. Plays a role in the regulation of mitotic spindle assembly and mitotic progression by associating with chromatin-associated WAPL and stabilizing it through deubiquitination. In Bos taurus (Bovine), this protein is Ubiquitin carboxyl-terminal hydrolase 37 (USP37).